A 924-amino-acid polypeptide reads, in one-letter code: MAEVSMGSSSSSTDLSPEEERVFIRDIAIAAEANSKEGDTFYLITQRWWQEWIEYVNQDQPCNTNDGSSLSEHCDSPGSSTLKKPSRIDNSDLIYDSSLEDPSNTSEIIETLQEGRDYVLLPQEVWNQLRSWYGGGPTLARRVISSGLSQTELAVEVYPLRLQLLLMPKSDHSAIRISKKETIRELHRRACEIFDLDSEHVRIWDYYGHQKYSLMNDLDKTLDDANLQMDQDILVEVLDINGTLSSAHIQSAQENGLVDGDSTSILIEPSKSSLAAAGGFSSSRNAFRTGSVEVSQSFDNTYSSTGVTTRGSTAGLTGLLNLGNTCFMNSAIQCLVHTPEFASYFQEDYHQEINWQNPLGMVGELALAFGDLLRKLWAPGRTPIAPRPFKAKLARFAPQFSGYNQHDSQELLAFLLDGLHEDLNRVKHKPYINSRDADGRPDEEVADEFWKNHIARNDSIIVDVCQGQYKSTLVCPICNKVSVTFDPFMYLSLPLQFNTTRAITVTVFSCDKTALPSTITVNVSKQGRCRDLIQALTNACSLKQSEELKLAEIRNNFIHRLFEDPLIPLSSIKDDDHLAAYKLSKSSENTTLLRLVLRRRDQKAGERESTVQLKPCGTPLLSSASCGDALTKGKIHCLVQNMLSPFRREESVGKKGNSDSSIPERRSARFNNTEEEDKVGGLKKAKKSNSSDLGASKLSLQLIDEDNKTINLPDNEAEAMKLPSSATVTIYLDWTPELSGMYDITCLESLPEVLKYGPTTKKARSEPLSLYACLEAFLREEPLVPDEMWFCPQCNERRQASKKLDLWRLPEVLVIHLKRFSYSRSMKHKLETFVNFPIHDLDLTKYVANKNLSQPQLYELYALTNHYGGMGSGHYTAHIKLLDDSRWYNFDDSHISHINEDDVKSGAAYVLFYRRKSDAGGKMT.

The DUSP domain maps to 15–145 (LSPEEERVFI…GPTLARRVIS (131 aa)). Residues 64 to 83 (TNDGSSLSEHCDSPGSSTLK) are compositionally biased toward polar residues. The disordered stretch occupies residues 64–87 (TNDGSSLSEHCDSPGSSTLKKPSR). The region spanning 317–916 (TGLLNLGNTC…AAYVLFYRRK (600 aa)) is the USP domain. Cysteine 326 acts as the Nucleophile in catalysis. The segment covering 648–667 (REESVGKKGNSDSSIPERRS) has biased composition (basic and acidic residues). Residues 648–690 (REESVGKKGNSDSSIPERRSARFNNTEEEDKVGGLKKAKKSNS) form a disordered region. Catalysis depends on histidine 874, which acts as the Proton acceptor.

The protein belongs to the peptidase C19 family.

The catalysed reaction is Thiol-dependent hydrolysis of ester, thioester, amide, peptide and isopeptide bonds formed by the C-terminal Gly of ubiquitin (a 76-residue protein attached to proteins as an intracellular targeting signal).. Recognizes and hydrolyzes the peptide bond at the C-terminal Gly of ubiquitin. Involved in the processing of poly-ubiquitin precursors as well as that of ubiquitinated proteins. This Arabidopsis thaliana (Mouse-ear cress) protein is Ubiquitin carboxyl-terminal hydrolase 5 (UBP5).